The chain runs to 102 residues: Large ribosomal subunit protein mL63 (102 aa).

Belongs to the mitochondrion-specific ribosomal protein mL63 family. Component of the mitochondrial large ribosomal subunit (mt-LSU). Mature mammalian 55S mitochondrial ribosomes consist of a small (28S) and a large (39S) subunit. The 28S small subunit contains a 12S ribosomal RNA (12S mt-rRNA) and 30 different proteins. The 39S large subunit contains a 16S rRNA (16S mt-rRNA), a copy of mitochondrial valine transfer RNA (mt-tRNA(Val)), which plays an integral structural role, and 52 different proteins.

The protein localises to the mitochondrion. This is Large ribosomal subunit protein mL63 (MRPL57) from Homo sapiens (Human).